The primary structure comprises 89 residues: Double-stranded DNA-binding protein (89 aa).

In terms of assembly, homodimer.

Functionally, may play a role in transcription of several T4 genes. Binds double-stranded DNA and interacts preferentially with T4 late promoter regions. This is Double-stranded DNA-binding protein (dsbA) from Enterobacteria phage T4 (Bacteriophage T4).